Reading from the N-terminus, the 264-residue chain is Thymidylate synthase (264 aa).

Residue R21 coordinates dUMP. Position 51 (H51) interacts with (6R)-5,10-methylene-5,6,7,8-tetrahydrofolate. 126 to 127 (RR) serves as a coordination point for dUMP. Residue C146 is the Nucleophile of the active site. DUMP-binding positions include 166–169 (RSAD), N177, and 207–209 (HLY). D169 lines the (6R)-5,10-methylene-5,6,7,8-tetrahydrofolate pocket. A263 contacts (6R)-5,10-methylene-5,6,7,8-tetrahydrofolate.

Belongs to the thymidylate synthase family. Bacterial-type ThyA subfamily. In terms of assembly, homodimer.

Its subcellular location is the cytoplasm. The catalysed reaction is dUMP + (6R)-5,10-methylene-5,6,7,8-tetrahydrofolate = 7,8-dihydrofolate + dTMP. Its pathway is pyrimidine metabolism; dTTP biosynthesis. Its function is as follows. Catalyzes the reductive methylation of 2'-deoxyuridine-5'-monophosphate (dUMP) to 2'-deoxythymidine-5'-monophosphate (dTMP) while utilizing 5,10-methylenetetrahydrofolate (mTHF) as the methyl donor and reductant in the reaction, yielding dihydrofolate (DHF) as a by-product. This enzymatic reaction provides an intracellular de novo source of dTMP, an essential precursor for DNA biosynthesis. This chain is Thymidylate synthase, found in Methylobacterium nodulans (strain LMG 21967 / CNCM I-2342 / ORS 2060).